The primary structure comprises 1012 residues: Autotransporter adhesin BpaC (1012 aa).

A signal peptide spans 1–71 (MNRIFKSIWC…PFAEEAMAAN (71 aa)). The segment at 72–921 (NAGVCLTYNG…VGQLNSAVSG (850 aa)) is surface exposed passenger domain. Disordered regions lie at residues 420 to 746 (GLQG…AGAT) and 785 to 809 (ENST…ESAA). Polar residues predominate over residues 427 to 442 (ANTGTASGDNSTASGD). Positions 443–504 (NATASGTNST…ANGTNSTASG (62 aa)) are enriched in low complexity. Positions 505 to 519 (DNSTASGTNASATGE) are enriched in polar residues. Residues 520-588 (NSTATGTDST…ANGTNSTASG (69 aa)) are compositionally biased toward low complexity. Residues 589-603 (DNSTASGTNASATGE) are compositionally biased toward polar residues. A compositionally biased stretch (low complexity) spans 604–630 (NSTATGTDSTASGSNSTANGTNSTASG). Residues 631–645 (DNSTASGTNASATGE) show a composition bias toward polar residues. 2 stretches are compositionally biased toward low complexity: residues 646 to 700 (NSTA…TASG) and 708 to 746 (TNAS…AGAT). Residues 922–959 (IRNQMDGMQGQIDTLARDAYSGIAAATALTMIPDVDPG) form an outer membrane translocation of the passenger domain region. Residues 960–1012 (KTLAVGIGTANFKGYQASALGATARITQNLKVKTGVSYSGSNYVWGAGMSYQW) are translocator domain.

The protein belongs to the autotransporter-2 (AT-2) (TC 1.B.40) family. In terms of assembly, homotrimer.

It is found in the cell surface. Its subcellular location is the cell outer membrane. Involved in virulence. Mediates adherence to human respiratory epithelial cells. This Burkholderia mallei (strain ATCC 23344) protein is Autotransporter adhesin BpaC.